Here is a 608-residue protein sequence, read N- to C-terminus: ATP-citrate synthase beta chain protein 1 (608 aa).

ATP is bound by residues 214-234 and 265-291; these read ILRFNNIPQVKMMVVLGELGG and FKSEVQFGHAGAKSGGELESAQAKNQA. Mg(2+) is bound at residue glutamate 231. Histidine 273 (tele-phosphohistidine intermediate) is an active-site residue. 292–302 contacts CoA; the sequence is LKDAGAVVPTS.

The protein belongs to the succinate/malate CoA ligase alpha subunit family. As to quaternary structure, heterooctamer of 4 alpha and 4 beta chains.

Its subcellular location is the cytoplasm. The protein localises to the cytosol. The enzyme catalyses oxaloacetate + acetyl-CoA + ADP + phosphate = citrate + ATP + CoA. Functionally, ATP citrate-lyase is the primary enzyme responsible for the synthesis of cytosolic acetyl-CoA, used for the elongation of fatty acids and biosynthesis of isoprenoids, flavonoids and malonated derivatives. May supply substrate to the cytosolic acetyl-CoA carboxylase, which generates the malonyl-CoA used for the synthesis of a multitude of compounds, including very long chain fatty acids and flavonoids. In contrast to all known animal ACL enzymes having a homomeric structure, plant ACLs are composed of alpha and beta chains. In Oryza sativa subsp. japonica (Rice), this protein is ATP-citrate synthase beta chain protein 1 (ACLB-1).